The sequence spans 292 residues: 4-hydroxy-tetrahydrodipicolinate synthase (292 aa).

Position 45 (threonine 45) interacts with pyruvate. Catalysis depends on tyrosine 133, which acts as the Proton donor/acceptor. Lysine 161 functions as the Schiff-base intermediate with substrate in the catalytic mechanism. Isoleucine 203 is a binding site for pyruvate.

The protein belongs to the DapA family. In terms of assembly, homotetramer; dimer of dimers.

The protein resides in the cytoplasm. The catalysed reaction is L-aspartate 4-semialdehyde + pyruvate = (2S,4S)-4-hydroxy-2,3,4,5-tetrahydrodipicolinate + H2O + H(+). Its pathway is amino-acid biosynthesis; L-lysine biosynthesis via DAP pathway; (S)-tetrahydrodipicolinate from L-aspartate: step 3/4. In terms of biological role, catalyzes the condensation of (S)-aspartate-beta-semialdehyde [(S)-ASA] and pyruvate to 4-hydroxy-tetrahydrodipicolinate (HTPA). The sequence is that of 4-hydroxy-tetrahydrodipicolinate synthase from Salmonella arizonae (strain ATCC BAA-731 / CDC346-86 / RSK2980).